We begin with the raw amino-acid sequence, 105 residues long: Pyruvate synthase subunit PorD (105 aa).

2 4Fe-4S ferredoxin-type domains span residues 44–73 (FRPEFKKDKCVRCFLCYIYCPEPAIYLDEE) and 74–103 (GYPVFDYDYCKGCGICANECPTNAIEMVRE). Cys53, Cys56, Cys59, Cys63, Cys83, Cys86, Cys89, and Cys93 together coordinate [4Fe-4S] cluster.

Heterotetramer of one alpha, one beta, one delta and one gamma chain. [4Fe-4S] cluster serves as cofactor.

The protein is Pyruvate synthase subunit PorD (porD) of Pyrococcus abyssi (strain GE5 / Orsay).